We begin with the raw amino-acid sequence, 350 residues long: Histidinol-phosphate aminotransferase (350 aa).

Lysine 209 carries the post-translational modification N6-(pyridoxal phosphate)lysine.

This sequence belongs to the class-II pyridoxal-phosphate-dependent aminotransferase family. Histidinol-phosphate aminotransferase subfamily. Homodimer. Requires pyridoxal 5'-phosphate as cofactor.

It carries out the reaction L-histidinol phosphate + 2-oxoglutarate = 3-(imidazol-4-yl)-2-oxopropyl phosphate + L-glutamate. It participates in amino-acid biosynthesis; L-histidine biosynthesis; L-histidine from 5-phospho-alpha-D-ribose 1-diphosphate: step 7/9. In Christiangramia forsetii (strain DSM 17595 / CGMCC 1.15422 / KT0803) (Gramella forsetii), this protein is Histidinol-phosphate aminotransferase.